We begin with the raw amino-acid sequence, 485 residues long: Glutamate--tRNA ligase (485 aa).

The 'HIGH' region signature appears at Pro12–Thr22. Positions 109, 111, 136, and 138 each coordinate Zn(2+). The 'KMSKS' region signature appears at Lys253–Arg257. Lys256 is a binding site for ATP.

The protein belongs to the class-I aminoacyl-tRNA synthetase family. Glutamate--tRNA ligase type 1 subfamily. Monomer. Zn(2+) serves as cofactor.

It is found in the cytoplasm. It catalyses the reaction tRNA(Glu) + L-glutamate + ATP = L-glutamyl-tRNA(Glu) + AMP + diphosphate. Functionally, catalyzes the attachment of glutamate to tRNA(Glu) in a two-step reaction: glutamate is first activated by ATP to form Glu-AMP and then transferred to the acceptor end of tRNA(Glu). The sequence is that of Glutamate--tRNA ligase from Agrobacterium fabrum (strain C58 / ATCC 33970) (Agrobacterium tumefaciens (strain C58)).